The sequence spans 85 residues: Cloacin immunity protein (85 aa).

N6-methyllysine is present on Lys-12.

It belongs to the cloacin immunity protein family.

This protein complexes with cloacin protein in equimolar amounts and inhibits it by binding with high affinity to the C-terminal catalytic domain of cloacin. The protein is Cloacin immunity protein (cim) of Escherichia coli.